Reading from the N-terminus, the 868-residue chain is Translation initiation factor IF-2 (868 aa).

Residues 201 to 269 form a disordered region; that stretch reads KEEVKPEKVS…GTEKSDKYRE (69 aa). The span at 249–260 shows a compositional bias: basic residues; it reads RGGRSKFKKKKG. Residues 368–537 enclose the tr-type G domain; the sequence is GRAPVVTIMG…LLQSEVLELK (170 aa). Residues 377-384 form a G1 region; it reads GHVDHGKT. 377 to 384 contributes to the GTP binding site; the sequence is GHVDHGKT. The interval 402–406 is G2; it reads GITQH. The interval 423-426 is G3; that stretch reads DTPG. GTP-binding positions include 423–427 and 477–480; these read DTPGH and NKMD. Residues 477-480 are G4; that stretch reads NKMD. The interval 513-515 is G5; it reads SAK.

The protein belongs to the TRAFAC class translation factor GTPase superfamily. Classic translation factor GTPase family. IF-2 subfamily.

It is found in the cytoplasm. One of the essential components for the initiation of protein synthesis. Protects formylmethionyl-tRNA from spontaneous hydrolysis and promotes its binding to the 30S ribosomal subunits. Also involved in the hydrolysis of GTP during the formation of the 70S ribosomal complex. The chain is Translation initiation factor IF-2 from Legionella pneumophila (strain Corby).